Here is a 265-residue protein sequence, read N- to C-terminus: Chlorophyll a-b binding protein 1C, chloroplastic (265 aa).

A chloroplast-targeting transit peptide spans 1 to 34 (MAAATMALSSPSFAGQAVKLSPSASEISGNGRIT). Residues 151 to 171 (LVHAQSILAIWACQVVLMGAV) form a helical membrane-spanning segment. 6 residues coordinate chlorophyll b: V152, S156, Q164, E172, R175, and L181. Positions 212, 213, 216, 218, 230, 245, and 254 each coordinate chlorophyll a. The chain crosses the membrane as a helical span at residues 219-239 (LAMFSMFGFFVQAIVTGKGPL). F261 is a chlorophyll b binding site.

It belongs to the light-harvesting chlorophyll a/b-binding (LHC) protein family. The LHC complex consists of chlorophyll a-b binding proteins. It depends on Binds at least 14 chlorophylls (8 Chl-a and 6 Chl-b) and carotenoids such as lutein and neoxanthin. as a cofactor. Post-translationally, photoregulated by reversible phosphorylation of its threonine residues.

It localises to the plastid. The protein localises to the chloroplast thylakoid membrane. In terms of biological role, the light-harvesting complex (LHC) functions as a light receptor, it captures and delivers excitation energy to photosystems with which it is closely associated. This Solanum lycopersicum (Tomato) protein is Chlorophyll a-b binding protein 1C, chloroplastic (CAB1C).